We begin with the raw amino-acid sequence, 2778 residues long: Probable ubiquitin carboxyl-terminal hydrolase FAF (2778 aa).

The segment at Met1 to Ser85 is disordered. Positions Thr10–Gly39 are enriched in low complexity. The segment covering Gln71–Ser85 has biased composition (polar residues). Ser924 is modified (phosphoserine). The segment at Gly1065–Glu1094 is disordered. The span at Ser1070–Ser1082 shows a compositional bias: low complexity. Positions Cys1668–Cys2062 constitute a USP domain. Cys1677 functions as the Nucleophile in the catalytic mechanism. Catalysis depends on His1986, which acts as the Proton acceptor. Disordered stretches follow at residues Val2568–Asn2632 and Ala2644–Leu2691. 2 stretches are compositionally biased toward low complexity: residues Thr2614–Ala2627 and Ala2644–Ala2671. Polar residues predominate over residues Asn2672–Leu2691.

The protein belongs to the peptidase C19 family. In terms of assembly, interacts with imd. In terms of processing, ubiquitinated. Ubiquitination is enhanced by the expression of imd. As to expression, eye disks and ovaries. Expressed in larval fat body.

It catalyses the reaction Thiol-dependent hydrolysis of ester, thioester, amide, peptide and isopeptide bonds formed by the C-terminal Gly of ubiquitin (a 76-residue protein attached to proteins as an intracellular targeting signal).. Functionally, ubiquitin C-terminal hydrolase involved in development and the imd/NF-kappa-B (IMD) signaling cascade. Required for eye and embryo development, and plays a role in compound eye assembly and oogenesis respectively. In the larval eye disks, cells outside the assembling facets require this protein for short-range cell interactions that prevent the mystery cells from becoming photoreceptors. Also required for nuclear migration and cellularization in early embryogenesis and could play a role in pole cell determination, development or function. Regulates the IMD signaling cascade at later stages of infection (around 6 hours post-infection) by inhibiting the expression of the antimicrobial peptides Dpt and Dro. Acts by modulating the state of imd polyubiquitination and/or stability; a function which appears to be independent of its enzymatic activity. In turn, imd enhances the polyubiquitination and stability of faf suggesting that they may form a regulatory feedback mechanism within the Imd pathway. This chain is Probable ubiquitin carboxyl-terminal hydrolase FAF (faf), found in Drosophila melanogaster (Fruit fly).